The primary structure comprises 134 residues: MGKDTIANIITYIRNADINKKGMVQLPFTNITEKIVKILLREGFVENIRKHRENDKSFLVLTLRYRRNRKESYKSFLNLKRISTPGLRIYYNYKKIPRILGGMGIVILSTSRGIMTDREARLEKIGGEVLCYIW.

Belongs to the universal ribosomal protein uS8 family. As to quaternary structure, part of the 30S ribosomal subunit.

The protein localises to the plastid. The protein resides in the chloroplast. Functionally, one of the primary rRNA binding proteins, it binds directly to 16S rRNA central domain where it helps coordinate assembly of the platform of the 30S subunit. The sequence is that of Small ribosomal subunit protein uS8c (rps8) from Phaseolus vulgaris (Kidney bean).